A 338-amino-acid chain; its full sequence is Ketol-acid reductoisomerase (NADP(+)) (338 aa).

Residues 1–181 (MNIYYDKDCD…GGGRAGIIET (181 aa)) form the KARI N-terminal Rossmann domain. Residues 24–27 (YGSQ), R47, S50, S52, and 82–85 (DEHQ) contribute to the NADP(+) site. Residue H107 is part of the active site. Position 133 (G133) interacts with NADP(+). In terms of domain architecture, KARI C-terminal knotted spans 182–327 (AFREETETDL…ERLRSMMPWI (146 aa)). Mg(2+)-binding residues include D190, E194, E226, and E230. S251 serves as a coordination point for substrate.

The protein belongs to the ketol-acid reductoisomerase family. The cofactor is Mg(2+).

The catalysed reaction is (2R)-2,3-dihydroxy-3-methylbutanoate + NADP(+) = (2S)-2-acetolactate + NADPH + H(+). The enzyme catalyses (2R,3R)-2,3-dihydroxy-3-methylpentanoate + NADP(+) = (S)-2-ethyl-2-hydroxy-3-oxobutanoate + NADPH + H(+). Its pathway is amino-acid biosynthesis; L-isoleucine biosynthesis; L-isoleucine from 2-oxobutanoate: step 2/4. It functions in the pathway amino-acid biosynthesis; L-valine biosynthesis; L-valine from pyruvate: step 2/4. In terms of biological role, involved in the biosynthesis of branched-chain amino acids (BCAA). Catalyzes an alkyl-migration followed by a ketol-acid reduction of (S)-2-acetolactate (S2AL) to yield (R)-2,3-dihydroxy-isovalerate. In the isomerase reaction, S2AL is rearranged via a Mg-dependent methyl migration to produce 3-hydroxy-3-methyl-2-ketobutyrate (HMKB). In the reductase reaction, this 2-ketoacid undergoes a metal-dependent reduction by NADPH to yield (R)-2,3-dihydroxy-isovalerate. This chain is Ketol-acid reductoisomerase (NADP(+)), found in Nitrosococcus oceani (strain ATCC 19707 / BCRC 17464 / JCM 30415 / NCIMB 11848 / C-107).